The sequence spans 312 residues: Malate dehydrogenase (312 aa).

NAD(+) contacts are provided by residues 12–17 (GAGFTG) and D36. Substrate is bound by residues R87 and R93. NAD(+) is bound by residues N100 and 123–125 (LTN). N125 is a substrate binding site. A Phosphoserine modification is found at S149. R156 contributes to the substrate binding site. H180 functions as the Proton acceptor in the catalytic mechanism.

The protein belongs to the LDH/MDH superfamily. MDH type 3 family.

The catalysed reaction is (S)-malate + NAD(+) = oxaloacetate + NADH + H(+). Functionally, catalyzes the reversible oxidation of malate to oxaloacetate. In Bacillus mycoides (strain KBAB4) (Bacillus weihenstephanensis), this protein is Malate dehydrogenase.